The following is a 451-amino-acid chain: Tubulin alpha-1 chain (451 aa).

Q11 contacts GTP. An N6-acetyllysine modification is found at K40. Positions 71, 144, 145, 179, 206, and 228 each coordinate GTP. E71 provides a ligand contact to Mg(2+). Residue E254 is part of the active site. The segment at 432 to 451 (YEEVGADSAEGDEEDEGDEY) is disordered.

It belongs to the tubulin family. Dimer of alpha and beta chains. A typical microtubule is a hollow water-filled tube with an outer diameter of 25 nm and an inner diameter of 15 nM. Alpha-beta heterodimers associate head-to-tail to form protofilaments running lengthwise along the microtubule wall with the beta-tubulin subunit facing the microtubule plus end conferring a structural polarity. Microtubules usually have 13 protofilaments but different protofilament numbers can be found in some organisms and specialized cells. It depends on Mg(2+) as a cofactor. Post-translationally, undergoes a tyrosination/detyrosination cycle, the cyclic removal and re-addition of a C-terminal tyrosine residue by the enzymes tubulin tyrosine carboxypeptidase (TTCP) and tubulin tyrosine ligase (TTL), respectively. Acetylation of alpha chains at Lys-40 stabilizes microtubules and affects affinity and processivity of microtubule motors. This modification has a role in multiple cellular functions, ranging from cell motility, cell cycle progression or cell differentiation to intracellular trafficking and signaling.

The protein localises to the cytoplasm. It localises to the cytoskeleton. The enzyme catalyses GTP + H2O = GDP + phosphate + H(+). Tubulin is the major constituent of microtubules, a cylinder consisting of laterally associated linear protofilaments composed of alpha- and beta-tubulin heterodimers. Microtubules grow by the addition of GTP-tubulin dimers to the microtubule end, where a stabilizing cap forms. Below the cap, tubulin dimers are in GDP-bound state, owing to GTPase activity of alpha-tubulin. The protein is Tubulin alpha-1 chain of Gossypium hirsutum (Upland cotton).